Consider the following 191-residue polypeptide: 2-amino-4-hydroxy-6-hydroxymethyldihydropteridine pyrophosphokinase (191 aa).

The protein belongs to the HPPK family.

The catalysed reaction is 6-hydroxymethyl-7,8-dihydropterin + ATP = (7,8-dihydropterin-6-yl)methyl diphosphate + AMP + H(+). It functions in the pathway cofactor biosynthesis; tetrahydrofolate biosynthesis; 2-amino-4-hydroxy-6-hydroxymethyl-7,8-dihydropteridine diphosphate from 7,8-dihydroneopterin triphosphate: step 4/4. Its function is as follows. Catalyzes the transfer of pyrophosphate from adenosine triphosphate (ATP) to 6-hydroxymethyl-7,8-dihydropterin, an enzymatic step in folate biosynthesis pathway. This is 2-amino-4-hydroxy-6-hydroxymethyldihydropteridine pyrophosphokinase (folK) from Mycobacterium leprae (strain TN).